The chain runs to 406 residues: MTDESSVRTPKALPDGVSQATVGVRGGMLRSGFEETAEAMYLTSGYVYGSAAVAEKSFAGELDHYVYSRYGNPTVSVFEERLRLIEGAPAAFATASGMAAVFTSLGALLGAGDRLVAARSLFGSCFVVCSEILPRWGVQTVFVDGDDLSQWERALSVPTQAVFFETPSNPMQSLVDIAAVTELAHAAGAKVVLDNVFATPLLQQGFPLGVDVVVYSGTKHIDGQGRVLGGAILGDREYIDGPVQKLMRHTGPAMSAFNAWVLLKGLETLAIRVQHSNASAQRIAEFLNGHPSVRWVRYPYLPSHPQYDLAKRQMSGGGTVVTFALDCPEDVAKQRAFEVLDKMRLIDISNNLGDAKSLVTHPATTTHRAMGPEGRAAIGLGDGVVRISVGLEDTDDLIADIDRALS.

An N6-(pyridoxal phosphate)lysine modification is found at Lys-219.

It belongs to the trans-sulfuration enzymes family. MetZ subfamily. In terms of assembly, homotetramer. Requires pyridoxal 5'-phosphate as cofactor.

It carries out the reaction O-succinyl-L-homoserine + hydrogen sulfide = L-homocysteine + succinate. The protein operates within amino-acid biosynthesis; L-methionine biosynthesis via de novo pathway; L-homocysteine from O-succinyl-L-homoserine: step 1/1. In terms of biological role, catalyzes the formation of L-homocysteine from O-succinyl-L-homoserine (OSHS) and hydrogen sulfide. The protein is O-succinylhomoserine sulfhydrylase of Mycobacterium tuberculosis (strain CDC 1551 / Oshkosh).